The primary structure comprises 470 residues: ATP synthase subunit beta (470 aa).

157–164 (GGAGVGKT) is an ATP binding site.

The protein belongs to the ATPase alpha/beta chains family. F-type ATPases have 2 components, CF(1) - the catalytic core - and CF(0) - the membrane proton channel. CF(1) has five subunits: alpha(3), beta(3), gamma(1), delta(1), epsilon(1). CF(0) has three main subunits: a(1), b(2) and c(9-12). The alpha and beta chains form an alternating ring which encloses part of the gamma chain. CF(1) is attached to CF(0) by a central stalk formed by the gamma and epsilon chains, while a peripheral stalk is formed by the delta and b chains.

Its subcellular location is the cell membrane. It catalyses the reaction ATP + H2O + 4 H(+)(in) = ADP + phosphate + 5 H(+)(out). Its function is as follows. Produces ATP from ADP in the presence of a proton gradient across the membrane. The catalytic sites are hosted primarily by the beta subunits. In Pelotomaculum thermopropionicum (strain DSM 13744 / JCM 10971 / SI), this protein is ATP synthase subunit beta.